The primary structure comprises 625 residues: MAU2 chromatid cohesion factor homolog (625 aa).

TPR repeat units lie at residues 96–129 (FDTA…SQNN), 451–484 (GGFY…ANAE), and 491–524 (SCSL…ASKI). Residues 600 to 611 (TVPTTETSTSAL) show a composition bias toward polar residues. The interval 600–625 (TVPTTETSTSALQQPQQPAAQFGQFY) is disordered. The span at 612-625 (QQPQQPAAQFGQFY) shows a compositional bias: low complexity.

The protein belongs to the SCC4/mau-2 family. Interacts with Nipped-B to form the cohesin loading complex.

The protein localises to the nucleus. The protein resides in the nucleoplasm. In terms of biological role, required for association of the cohesin complex with chromatin during interphase. Plays a role in sister chromatid cohesion and normal progression through prometaphase. The polypeptide is MAU2 chromatid cohesion factor homolog (Drosophila mojavensis (Fruit fly)).